Reading from the N-terminus, the 302-residue chain is MIINGVTIDDTFAEAFGMRGTRVIITAQNLRWAYNAARAMTGFATSVIACGVEAGIERELTPEETPDGRPGVSILMFAMSSAVLIKQLETRMGQCVLTCPTAAAFSGIDEGYPEITRINLGKNLRFFGDGFQISKVFNGKRYWRVPVMDGEFLTEETTGMIRSVGGGNFLILAESQPQALAACEAAIDAMSKIPNVIMPFPGGVVRSGSKVGSKYKALIASTNDAFCPTLKGITKTELSPEIESVMEIVIDGLTDPDIRVAMRAGIAAACELGAKNGIKRISAGNYGGKLGPYHFKLREIMA.

This sequence belongs to the FTR family. Homotetramer.

The protein localises to the cytoplasm. The enzyme catalyses N-formylmethanofuran + 5,6,7,8-tetrahydromethanopterin + H(+) = N(5)-formyl-5,6,7,8-tetrahydromethanopterin + methanofuran. The protein operates within one-carbon metabolism; formaldehyde degradation; formate from formaldehyde (H(4)MPT route): step 4/5. Functionally, catalyzes the transfer of a formyl group from 5-formyl tetrahydromethanopterin (5-formyl-H(4)MPT) to methanofuran (MFR) to produce formylmethanofuran (formyl-MFR) and tetrahydromethanopterin (H(4)MPT). This is Formylmethanofuran--tetrahydromethanopterin formyltransferase from Methylobacillus flagellatus (strain ATCC 51484 / DSM 6875 / VKM B-1610 / KT).